We begin with the raw amino-acid sequence, 464 residues long: D-2-hydroxyglutarate dehydrogenase (464 aa).

One can recognise an FAD-binding PCMH-type domain in the interval 37–216 (FAPAPSAIVF…VEATMRLERQ (180 aa)). (R)-2-hydroxyglutarate contacts are provided by Arg-325, Ser-329, and Lys-339. Arg-325, Ser-329, and Lys-339 together coordinate (R)-malate. Positions 374 and 381 each coordinate Zn(2+). Asn-383 provides a ligand contact to (R)-2-hydroxyglutarate. A Zn(2+)-binding site is contributed by Glu-420. His-421 contributes to the (R)-2-hydroxyglutarate binding site. A (R)-malate-binding site is contributed by His-421.

Belongs to the FAD-binding oxidoreductase/transferase type 4 family. Homodimer. It depends on FAD as a cofactor.

The catalysed reaction is (R)-2-hydroxyglutarate + A = 2-oxoglutarate + AH2. It catalyses the reaction (R)-malate + A = oxaloacetate + AH2. With respect to regulation, activated by Zn(2+) ions at low concentrations (10 uM) and inhibited by Zn(2+), Fe(2+) and Ni(2+) at high concentrations (10 mM). In terms of biological role, catalyzes the dehydrogenation of (R)-2-hydroxyglutarate (D-2-hydroxyglutarate or D-2-HG) to 2-oxoglutarate and of (R)-malate (D-malate) to oxaloacetate. Is functionally tied to L-serine biosynthesis, via its coupling with the D-3-phosphoglycerate dehydrogenase SerA, encoded by the adjacent gene in the locus. Is required for the utilization of D-2-hydroxyglutarate as well as D-malate as the sole carbon source for growth of P.stutzeri. Active in vitro with artificial electron acceptors such as 2,6-dichlorophenolindophenol (DCPIP) and appears to couple with electron transfer flavoprotein (ETF) for efficient oxidation of both D-2-hydroxyglutarate and D-malate in vivo. Cannot catalyze the oxidation of L-2-hydroxyglutarate, D-lactate, D-tartrate, D-2-hydroxybutanoate, D-mandelate, D-glycerate and D-phenyllactate. This is D-2-hydroxyglutarate dehydrogenase from Stutzerimonas stutzeri (strain A1501) (Pseudomonas stutzeri).